We begin with the raw amino-acid sequence, 213 residues long: Kynurenine formamidase (213 aa).

W18 serves as a coordination point for substrate. Zn(2+) is bound by residues H48, H52, and D54. Residue H58 is the Proton donor/acceptor of the active site. Zn(2+) contacts are provided by H160 and E172.

The protein belongs to the Cyclase 1 superfamily. KynB family. Homodimer. Zn(2+) serves as cofactor.

The enzyme catalyses N-formyl-L-kynurenine + H2O = L-kynurenine + formate + H(+). The protein operates within amino-acid degradation; L-tryptophan degradation via kynurenine pathway; L-kynurenine from L-tryptophan: step 2/2. Its function is as follows. Catalyzes the hydrolysis of N-formyl-L-kynurenine to L-kynurenine, the second step in the kynurenine pathway of tryptophan degradation. The protein is Kynurenine formamidase of Burkholderia multivorans (strain ATCC 17616 / 249).